The sequence spans 468 residues: N-acyl-phosphatidylethanolamine-hydrolyzing phospholipase D, mitochondrial (468 aa).

A mitochondrion-targeting transit peptide spans 1–39; the sequence is MNFVTCHVQMRLLLQRRLVRLRESELFRPQTSLSTFKRH. The chain crosses the membrane as a helical span at residues 54-76; it reads YARILLLSVLVPYTGYAFYVSLA. Positions 265, 267, 269, 270, 332, and 425 each coordinate Zn(2+).

It belongs to the NAPE-PLD family. The cofactor is Zn(2+).

The protein resides in the mitochondrion membrane. It catalyses the reaction an N-acyl-1,2-diacyl-sn-glycero-3-phosphoethanolamine + H2O = an N-acylethanolamine + a 1,2-diacyl-sn-glycero-3-phosphate + H(+). Hydrolyzes N-acyl-phosphatidylethanolamines (NAPEs) to produce N-acylethanolamines (NAEs). In Saccharomyces cerevisiae (strain ATCC 204508 / S288c) (Baker's yeast), this protein is N-acyl-phosphatidylethanolamine-hydrolyzing phospholipase D, mitochondrial (FMP30).